Here is a 137-residue protein sequence, read N- to C-terminus: Structural protein A137R (137 aa).

It belongs to the asfivirus A137R family. Interacts with host TBK1.

The protein resides in the virion. The protein localises to the host cytoplasm. Its function is as follows. Plays a role in the inhibition of the host innate immune response. Mechanistically, promotes the autophagy-mediated lysosomal degradation of host TBK1 and affects IRF3 nuclear translocation to block type I IFN production. This chain is Structural protein A137R, found in Ornithodoros (relapsing fever ticks).